A 148-amino-acid chain; its full sequence is U5-hexatoxin-Hi1a (148 aa).

The N-terminal stretch at 1-21 (MNFSVVAVALVVVLTVHFTDG) is a signal peptide. A propeptide spanning residues 22–38 (QETSSSLPSPPSPLPGR) is cleaved from the precursor. Positions 125–148 (TPSTTVTTPTPTTETPTTETPSTP) are disordered.

Contains 2 disulfide bonds. As to expression, expressed by the venom gland.

It localises to the secreted. Probable ion channel inhibitor. This Hadronyche infensa (Fraser island funnel-web spider) protein is U5-hexatoxin-Hi1a.